A 106-amino-acid chain; its full sequence is Large ribosomal subunit protein eL30 (106 aa).

Belongs to the eukaryotic ribosomal protein eL30 family.

The sequence is that of Large ribosomal subunit protein eL30 from Methanococcus maripaludis (strain C7 / ATCC BAA-1331).